A 355-amino-acid chain; its full sequence is Plasmodial-specific protein LAV1-2 (355 aa).

2 consecutive EF-hand domains span residues 151 to 186 and 217 to 252; these read EDTNILRQLFLSSAVSGSGKFSFQDLKQVLAKYADT and NDLAALVADFRKIDTNSNGTLSRKEFREHFVRLGFD. Residues Asp-230, Asn-232, Asn-234, Thr-236, Glu-241, Asp-265, Asp-267, Ser-269, Asp-271, Glu-276, Asp-295, Asp-297, Ser-299, Gln-301, Glu-306, Asp-332, Asp-334, Ser-336, Ser-338, and Glu-343 each contribute to the Ca(2+) site. EF-hand domains lie at 282-317 and 319-354; these read LCLLVLRILYAFADFDKSGQLSKEEVQKVLEDAHIP and SARKKFEHQFSVVDVDDSKSLSYQEFVMLVLLMFHD.

This is Plasmodial-specific protein LAV1-2 from Physarum polycephalum (Slime mold).